Reading from the N-terminus, the 757-residue chain is Palmitoyltransferase AKR1 (757 aa).

Polar residues-rich tracts occupy residues 1–20 (MSDI…STDP) and 36–46 (ESISSLQPIVS). A disordered region spans residues 1–54 (MSDINTESGESTSLPNSTDPPLSDVNIDVEDDDTAESISSLQPIVSNTTNPPEE). Topologically, residues 1-307 (MSDINTESGE…KLFKKSDHAK (307 aa)) are cytoplasmic. ANK repeat units follow at residues 58–88 (PVLG…DLNT), 92–121 (GDIT…DVNA), 126–155 (LEAT…DPTM), 159–188 (QGFN…AKGI), 197–226 (KGRT…STKI), and 230–259 (GGFT…DFFL). The helical transmembrane segment at 308–328 (VITFFVPLVALSIIFILFTHL) threads the bilayer. Residues 329-331 (HPL) lie on the Lumenal side of the membrane. Residues 332–352 (FALLISLIFGLAVNKALKELI) form a helical membrane-spanning segment. At 353–375 (LPSYSNYGLHSTSLLKSPFLSGT) the chain is on the cytoplasmic side. The chain crosses the membrane as a helical span at residues 376 to 396 (FFGSLLLLTIVWIFKIAPFTI). The Lumenal portion of the chain corresponds to 397 to 402 (FKSRLL). The chain crosses the membrane as a helical span at residues 403 to 423 (TNFFMFLILMQIYYLFIKLIF). Residues 424-498 (SDPGCVPIET…YNDIGLKNHK (75 aa)) lie on the Cytoplasmic side of the membrane. The 51-residue stretch at 455–505 (NFCLETWIRKPLRSHFSTLNTHNVARFDHFCPWIYNDIGLKNHKNFMWFIL) folds into the DHHC domain. C485 (S-palmitoyl cysteine intermediate) is an active-site residue. A helical membrane pass occupies residues 499–519 (NFMWFILLTEVGIWFFISLTM). Residues 520–550 (KYFDILEDTNEDVACFLLGDDELCAGFVYDR) are Lumenal-facing. Residues 551 to 571 (FTFLIALWALIQSVWVGFLIV) form a helical membrane-spanning segment. Topologically, residues 572 to 757 (VQVFQTFTGV…YPEPTGPESV (186 aa)) are cytoplasmic. The disordered stretch occupies residues 614-647 (ELRNDDDDTAASRTGNNPNHSNGTTIPSEGSRIN). Residues 624 to 646 (ASRTGNNPNHSNGTTIPSEGSRI) show a composition bias toward polar residues.

This sequence belongs to the DHHC palmitoyltransferase family. AKR/ZDHHC17 subfamily.

Its subcellular location is the early endosome membrane. The protein resides in the golgi apparatus membrane. The catalysed reaction is L-cysteinyl-[protein] + hexadecanoyl-CoA = S-hexadecanoyl-L-cysteinyl-[protein] + CoA. In terms of biological role, palmitoyltransferase specific for casein kinase 1. In Naumovozyma castellii (Yeast), this protein is Palmitoyltransferase AKR1 (AKR1).